The sequence spans 407 residues: MAPAGGKNVKKGILERLNSGEVIIGDGGFVFALEKRGYVKAGPWTPEAAVEHPEAVRQLHREFLRAGSNVMQTFTFYASEDKLENRGNYVAEKISGQKVNEAACDIARQVADEGDALVAGGVSQTPSYLSCKSETEVKKVFQQQLEVFVKKNVDFLIAEYFEHVEEAVWAVEALKASGKPVAATMCIGPEGDLHSVTPGECAVRLVKAGASIVGVNCHFDPTISLQTVKLMKEGLEAAGLKAHLMSQPLAYHTPDCGKQGFIDLPEFPFGLEPRVATRWDIQKYAREAYNLGVRYIGGCCGFEPYHIRAIAEELAPERGFLPLASEKHGSWGSGLDMHTKPWIRARARKEYWENLQIASGRPYNPSMSKPDAWGVTKGTAELMQQKEATTEQQLRELFEKQKFKSAQ.

Residues Lys-11 to Leu-314 enclose the Hcy-binding domain. Residues Lys-40, Lys-93, and Lys-98 each carry the N6-succinyllysine modification. A Zn(2+)-binding site is contributed by Cys-217. N6-succinyllysine is present on residues Lys-232 and Lys-241. The Zn(2+) site is built by Cys-299 and Cys-300. A Phosphoserine modification is found at Ser-330. Residues Lys-340 and Lys-377 each carry the N6-succinyllysine modification.

Homotetramer. Zn(2+) is required as a cofactor.

It localises to the cytoplasm. Its subcellular location is the cytosol. The protein localises to the nucleus. The catalysed reaction is L-homocysteine + glycine betaine = N,N-dimethylglycine + L-methionine. The protein operates within amine and polyamine degradation; betaine degradation; sarcosine from betaine: step 1/2. It participates in amino-acid biosynthesis; L-methionine biosynthesis via de novo pathway; L-methionine from L-homocysteine (BhmT route): step 1/1. In terms of biological role, involved in the regulation of homocysteine metabolism. Converts betaine and homocysteine to dimethylglycine and methionine, respectively. This reaction is also required for the irreversible oxidation of choline. The polypeptide is Betaine--homocysteine S-methyltransferase 1 (BHMT) (Bos taurus (Bovine)).